We begin with the raw amino-acid sequence, 122 residues long: Acidic phospholipase A2 2 (122 aa).

7 disulfide bridges follow: Cys-26–Cys-115, Cys-28–Cys-44, Cys-43–Cys-95, Cys-49–Cys-122, Cys-50–Cys-88, Cys-57–Cys-81, and Cys-75–Cys-86. Tyr-27, Gly-29, and Gly-31 together coordinate Ca(2+). Residue His-47 is part of the active site. Asp-48 serves as a coordination point for Ca(2+). Asp-89 is an active-site residue.

This sequence belongs to the phospholipase A2 family. Group II subfamily. D49 sub-subfamily. The cofactor is Ca(2+). Expressed by the venom gland.

It localises to the secreted. The catalysed reaction is a 1,2-diacyl-sn-glycero-3-phosphocholine + H2O = a 1-acyl-sn-glycero-3-phosphocholine + a fatty acid + H(+). Snake venom phospholipase A2 (PLA2) that has high lipolytic activity. PLA2 catalyzes the calcium-dependent hydrolysis of the 2-acyl groups in 3-sn-phosphoglycerides. The protein is Acidic phospholipase A2 2 of Craspedocephalus gramineus (Bamboo pit viper).